The chain runs to 288 residues: 33 kDa chaperonin (288 aa).

Disulfide bonds link Cys-235-Cys-237 and Cys-268-Cys-271.

Belongs to the HSP33 family. In terms of processing, under oxidizing conditions two disulfide bonds are formed involving the reactive cysteines. Under reducing conditions zinc is bound to the reactive cysteines and the protein is inactive.

The protein resides in the cytoplasm. Its function is as follows. Redox regulated molecular chaperone. Protects both thermally unfolding and oxidatively damaged proteins from irreversible aggregation. Plays an important role in the bacterial defense system toward oxidative stress. In Streptococcus thermophilus (strain CNRZ 1066), this protein is 33 kDa chaperonin.